The primary structure comprises 357 residues: Ribosomal RNA large subunit methyltransferase M (357 aa).

S-adenosyl-L-methionine-binding positions include Ser183, 216-219 (APGG), Asp235, Asp255, and Asp271. Lys300 acts as the Proton acceptor in catalysis.

It belongs to the class I-like SAM-binding methyltransferase superfamily. RNA methyltransferase RlmE family. RlmM subfamily. As to quaternary structure, monomer.

The protein localises to the cytoplasm. It carries out the reaction cytidine(2498) in 23S rRNA + S-adenosyl-L-methionine = 2'-O-methylcytidine(2498) in 23S rRNA + S-adenosyl-L-homocysteine + H(+). Functionally, catalyzes the 2'-O-methylation at nucleotide C2498 in 23S rRNA. The chain is Ribosomal RNA large subunit methyltransferase M from Pseudomonas syringae pv. syringae (strain B728a).